A 236-amino-acid polypeptide reads, in one-letter code: MTKRYWNITFEEMMEAGVHFGHDTRKWNPRMAPFISAKRKGIHITNLTKTARFLSEACDLAFDAASKGKQFLIVGTKKKAADSVTRAAIRARCHYVNKKWLRGMLTNWYTTETRLGKFRDLRTEQKTGKLNSLPKRDAAMLKRQLSHFETYLGGIKYMTGLPDIVIIVDQQKEYTALQECITLGIPTICLIDTNCDPDLADMSIPANDDAIASIRLILNKLVFAICEGRSSSIRNY.

The protein belongs to the universal ribosomal protein uS2 family.

Its subcellular location is the plastid. It localises to the chloroplast. This is Small ribosomal subunit protein uS2c (rps2) from Pisum sativum (Garden pea).